Reading from the N-terminus, the 231-residue chain is Glutathione-S-transferase (231 aa).

Residues 15–98 (LFAVKGTATS…YIADAYDKDG (84 aa)) form the GST N-terminal domain.

This sequence belongs to the GST superfamily.

It carries out the reaction RX + glutathione = an S-substituted glutathione + a halide anion + H(+). In terms of biological role, conjugation of reduced glutathione to a wide number of exogenous and endogenous hydrophobic electrophiles. This chain is Glutathione-S-transferase, found in Alternaria alternata (Alternaria rot fungus).